Consider the following 521-residue polypeptide: Bifunctional purine biosynthesis protein PurH (521 aa).

Positions 1–145 (MIKQALISVS…KNHRDVTVVV (145 aa)) constitute an MGS-like domain.

Belongs to the PurH family.

It catalyses the reaction (6R)-10-formyltetrahydrofolate + 5-amino-1-(5-phospho-beta-D-ribosyl)imidazole-4-carboxamide = 5-formamido-1-(5-phospho-D-ribosyl)imidazole-4-carboxamide + (6S)-5,6,7,8-tetrahydrofolate. It carries out the reaction IMP + H2O = 5-formamido-1-(5-phospho-D-ribosyl)imidazole-4-carboxamide. The protein operates within purine metabolism; IMP biosynthesis via de novo pathway; 5-formamido-1-(5-phospho-D-ribosyl)imidazole-4-carboxamide from 5-amino-1-(5-phospho-D-ribosyl)imidazole-4-carboxamide (10-formyl THF route): step 1/1. It participates in purine metabolism; IMP biosynthesis via de novo pathway; IMP from 5-formamido-1-(5-phospho-D-ribosyl)imidazole-4-carboxamide: step 1/1. The chain is Bifunctional purine biosynthesis protein PurH from Burkholderia orbicola (strain AU 1054).